Here is a 315-residue protein sequence, read N- to C-terminus: Methionyl-tRNA formyltransferase (315 aa).

A (6S)-5,6,7,8-tetrahydrofolate-binding site is contributed by 113-116 (SLLP).

The protein belongs to the Fmt family.

It catalyses the reaction L-methionyl-tRNA(fMet) + (6R)-10-formyltetrahydrofolate = N-formyl-L-methionyl-tRNA(fMet) + (6S)-5,6,7,8-tetrahydrofolate + H(+). Its function is as follows. Attaches a formyl group to the free amino group of methionyl-tRNA(fMet). The formyl group appears to play a dual role in the initiator identity of N-formylmethionyl-tRNA by promoting its recognition by IF2 and preventing the misappropriation of this tRNA by the elongation apparatus. The polypeptide is Methionyl-tRNA formyltransferase (Photorhabdus laumondii subsp. laumondii (strain DSM 15139 / CIP 105565 / TT01) (Photorhabdus luminescens subsp. laumondii)).